The following is a 190-amino-acid chain: Probable nicotinate-nucleotide adenylyltransferase (190 aa).

It belongs to the NadD family.

The catalysed reaction is nicotinate beta-D-ribonucleotide + ATP + H(+) = deamido-NAD(+) + diphosphate. It participates in cofactor biosynthesis; NAD(+) biosynthesis; deamido-NAD(+) from nicotinate D-ribonucleotide: step 1/1. Functionally, catalyzes the reversible adenylation of nicotinate mononucleotide (NaMN) to nicotinic acid adenine dinucleotide (NaAD). This is Probable nicotinate-nucleotide adenylyltransferase from Staphylococcus saprophyticus subsp. saprophyticus (strain ATCC 15305 / DSM 20229 / NCIMB 8711 / NCTC 7292 / S-41).